Here is a 354-residue protein sequence, read N- to C-terminus: 3-dehydroquinate synthase (354 aa).

Residues 69–74 (DGEAEK), 103–107 (GVIGD), 127–128 (TS), K140, and K149 each bind NAD(+). Zn(2+)-binding residues include E182, H245, and H262.

It belongs to the sugar phosphate cyclases superfamily. Dehydroquinate synthase family. Requires Co(2+) as cofactor. Zn(2+) serves as cofactor. The cofactor is NAD(+).

Its subcellular location is the cytoplasm. The catalysed reaction is 7-phospho-2-dehydro-3-deoxy-D-arabino-heptonate = 3-dehydroquinate + phosphate. The protein operates within metabolic intermediate biosynthesis; chorismate biosynthesis; chorismate from D-erythrose 4-phosphate and phosphoenolpyruvate: step 2/7. In terms of biological role, catalyzes the conversion of 3-deoxy-D-arabino-heptulosonate 7-phosphate (DAHP) to dehydroquinate (DHQ). This chain is 3-dehydroquinate synthase, found in Colwellia psychrerythraea (strain 34H / ATCC BAA-681) (Vibrio psychroerythus).